Here is a 238-residue protein sequence, read N- to C-terminus: Laccase-S (238 aa).

Plastocyanin-like domains lie at 4–87 and 100–238; these read NVIA…YDPA and HTII…IARY. Residue Asn-8 is glycosylated (N-linked (GlcNAc...) asparagine). The Cu cation site is built by His-21, His-23, His-66, and His-68. Cys-74 and Cys-162 are disulfide-bonded. Residue Asn-165 is glycosylated (N-linked (GlcNAc...) asparagine).

The protein belongs to the multicopper oxidase family. As to quaternary structure, monomer. Cu cation serves as cofactor.

It is found in the secreted. The catalysed reaction is 4 hydroquinone + O2 = 4 benzosemiquinone + 2 H2O. Activity is strongly promoted by toluene. Activity is promoted by magnesium, potassium, cadmium, zinc, nickel, sodium, lead and manganese ions. Completely inhibited by IAA (cysteine protease inhibitor), PMSF (serine protease inhibitor), DEP (histidine protease inhibitor) and NAI (tyrosine protease inhibitor). Inhibited by ethanol, acetone, SDS, and EDTA. Activity is strongly inhibited by mercury ions. Also inhibited by lithium, aluminum, calcium, barium and iron ions. Lignin degradation and detoxification of lignin-derived products. Has activity towards 2,2'-azino-bis(3-ethylbenzothiazoline-6-sulfonic acid) (ABTS). This Trametes hirsuta (White-rot fungus) protein is Laccase-S.